The chain runs to 209 residues: Thiamine-phosphate synthase (209 aa).

4-amino-2-methyl-5-(diphosphooxymethyl)pyrimidine contacts are provided by residues 35–39 and Asn-67; that span reads QYRDK. The Mg(2+) site is built by Asp-68 and Asp-86. 4-amino-2-methyl-5-(diphosphooxymethyl)pyrimidine is bound at residue Thr-105. 2-[(2R,5Z)-2-carboxy-4-methylthiazol-5(2H)-ylidene]ethyl phosphate is bound at residue 132–134; sequence SNT. Residue Lys-135 coordinates 4-amino-2-methyl-5-(diphosphooxymethyl)pyrimidine. 2-[(2R,5Z)-2-carboxy-4-methylthiazol-5(2H)-ylidene]ethyl phosphate is bound at residue Gly-162.

Belongs to the thiamine-phosphate synthase family. Mg(2+) is required as a cofactor.

It carries out the reaction 2-[(2R,5Z)-2-carboxy-4-methylthiazol-5(2H)-ylidene]ethyl phosphate + 4-amino-2-methyl-5-(diphosphooxymethyl)pyrimidine + 2 H(+) = thiamine phosphate + CO2 + diphosphate. The enzyme catalyses 2-(2-carboxy-4-methylthiazol-5-yl)ethyl phosphate + 4-amino-2-methyl-5-(diphosphooxymethyl)pyrimidine + 2 H(+) = thiamine phosphate + CO2 + diphosphate. The catalysed reaction is 4-methyl-5-(2-phosphooxyethyl)-thiazole + 4-amino-2-methyl-5-(diphosphooxymethyl)pyrimidine + H(+) = thiamine phosphate + diphosphate. It functions in the pathway cofactor biosynthesis; thiamine diphosphate biosynthesis; thiamine phosphate from 4-amino-2-methyl-5-diphosphomethylpyrimidine and 4-methyl-5-(2-phosphoethyl)-thiazole: step 1/1. Its function is as follows. Condenses 4-methyl-5-(beta-hydroxyethyl)thiazole monophosphate (THZ-P) and 2-methyl-4-amino-5-hydroxymethyl pyrimidine pyrophosphate (HMP-PP) to form thiamine monophosphate (TMP). This is Thiamine-phosphate synthase from Pseudomonas fluorescens (strain SBW25).